The sequence spans 67 residues: Large ribosomal subunit protein bL31 (67 aa).

Residues Cys-16, Cys-18, Cys-36, and Cys-39 each contribute to the Zn(2+) site.

This sequence belongs to the bacterial ribosomal protein bL31 family. Type A subfamily. Part of the 50S ribosomal subunit. Zn(2+) serves as cofactor.

Functionally, binds the 23S rRNA. In Syntrophomonas wolfei subsp. wolfei (strain DSM 2245B / Goettingen), this protein is Large ribosomal subunit protein bL31.